Reading from the N-terminus, the 513-residue chain is Histidine ammonia-lyase (513 aa).

Positions 146–148 form a cross-link, 5-imidazolinone (Ala-Gly); that stretch reads ASG. S147 is subject to 2,3-didehydroalanine (Ser).

It belongs to the PAL/histidase family. Post-translationally, contains an active site 4-methylidene-imidazol-5-one (MIO), which is formed autocatalytically by cyclization and dehydration of residues Ala-Ser-Gly.

The protein resides in the cytoplasm. It carries out the reaction L-histidine = trans-urocanate + NH4(+). It participates in amino-acid degradation; L-histidine degradation into L-glutamate; N-formimidoyl-L-glutamate from L-histidine: step 1/3. The protein is Histidine ammonia-lyase of Caulobacter vibrioides (strain NA1000 / CB15N) (Caulobacter crescentus).